The following is a 409-amino-acid chain: Short chain dehydrogenase sirS (409 aa).

Val49, Leu68, Lys195, Val288, Thr290, and Ala299 together coordinate NADP(+). The segment at Gly306–Ser332 is disordered.

The protein belongs to the short-chain dehydrogenases/reductases (SDR) family. Highly divergent.

It participates in mycotoxin biosynthesis. Functionally, short chain dehydrogenase; part of the gene cluster that mediates the biosynthesis of sirodesmin PL, an epipolythiodioxopiperazine (ETP) characterized by a disulfide bridged cyclic dipeptide and that acts as a phytotoxin which is involved in the blackleg didease of canola. SirD catalyzes the O-prenylation of L-tyrosine (L-Tyr) in the presence of dimethylallyl diphosphate (DMAPP) to yield 4-O-dimethylallyl-L-Tyr, and therefore represents probably the first pathway-specific enzyme in the biosynthesis of sirodesmin PL. 4-O-dimethylallyl-L-Tyr, then undergoes condensation with L-Ser in a reaction catalyzed by the non-ribosomal peptide synthase sirP to form the diketopiperazine (DKP) backbone. Further bishydroxylation of the DKP performed by the cytochrome P450 monooxygenase sirC leads to the production of the intermediate phomamide. This step is essential to form the reactive thiol group required for toxicity of sirodesmin PL. The next steps of sirodesmin biosynthesis are not well understood yet, but some predictions could be made from intermediate compounds identification. Phomamide is converted into phomalizarine via oxidation, probably by sirT. Further oxidation, methylation (by sirM or sirN) and reduction steps convert phomalizarine to deacetyl sirodesmin. Finally, acetyltransferase sirH probably acetylates deacetyl sirodesmin to produce sirodesmin PL. This chain is Short chain dehydrogenase sirS, found in Leptosphaeria maculans (Blackleg fungus).